Reading from the N-terminus, the 210-residue chain is Large ribosomal subunit protein uL4 (210 aa).

A compositionally biased stretch (polar residues) spans 41–52; sequence QTNARQGTASTK. Residues 41–71 are disordered; that stretch reads QTNARQGTASTKTRAEVRGGGRKPWRQKGTG. Basic residues predominate over residues 60 to 71; that stretch reads GGRKPWRQKGTG.

This sequence belongs to the universal ribosomal protein uL4 family. In terms of assembly, part of the 50S ribosomal subunit.

In terms of biological role, one of the primary rRNA binding proteins, this protein initially binds near the 5'-end of the 23S rRNA. It is important during the early stages of 50S assembly. It makes multiple contacts with different domains of the 23S rRNA in the assembled 50S subunit and ribosome. Forms part of the polypeptide exit tunnel. The protein is Large ribosomal subunit protein uL4 of Nostoc sp. (strain PCC 7120 / SAG 25.82 / UTEX 2576).